The following is a 56-amino-acid chain: Large ribosomal subunit protein bL33 (56 aa).

It belongs to the bacterial ribosomal protein bL33 family.

The polypeptide is Large ribosomal subunit protein bL33 (rpmG) (Treponema pallidum (strain Nichols)).